A 1317-amino-acid chain; its full sequence is DNA-directed RNA polymerase subunit beta' (1317 aa).

The Zn(2+) site is built by C60, C62, C75, and C78. The Mg(2+) site is built by D535, D537, and D539. Positions 890, 967, 974, and 977 each coordinate Zn(2+).

Belongs to the RNA polymerase beta' chain family. The RNAP catalytic core consists of 2 alpha, 1 beta, 1 beta' and 1 omega subunit. When a sigma factor is associated with the core the holoenzyme is formed, which can initiate transcription. Mg(2+) is required as a cofactor. Zn(2+) serves as cofactor.

It carries out the reaction RNA(n) + a ribonucleoside 5'-triphosphate = RNA(n+1) + diphosphate. Functionally, DNA-dependent RNA polymerase catalyzes the transcription of DNA into RNA using the four ribonucleoside triphosphates as substrates. This chain is DNA-directed RNA polymerase subunit beta', found in Nocardia farcinica (strain IFM 10152).